The sequence spans 1225 residues: Cytosolic carboxypeptidase 1 (1225 aa).

Acidic residues predominate over residues 366–392; that stretch reads DDVVDESDDNEDTDAETEAEAENEDSD. Positions 366 to 398 are disordered; it reads DDVVDESDDNEDTDAETEAEAENEDSDQICKND. The region spanning 842–1132 is the Peptidase M14 domain; sequence YPYTYSTLKM…KFCVGLLRLK (291 aa). Positions 914, 917, and 1011 each coordinate Zn(2+). Catalysis depends on Glu1096, which acts as the Proton donor/acceptor. The span at 1181–1193 shows a compositional bias: acidic residues; that stretch reads YSAESNDDVDPDL. Residues 1181-1225 are disordered; the sequence is YSAESNDDVDPDLPENIGDFETSTLEEESFSDSEITRTHMSGQST.

The protein belongs to the peptidase M14 family. Requires Zn(2+) as cofactor.

The protein resides in the cytoplasm. Its subcellular location is the cytosol. It is found in the nucleus. It localises to the mitochondrion. It carries out the reaction (L-glutamyl)(n+1)-gamma-L-glutamyl-L-glutamyl-[protein] + H2O = (L-glutamyl)(n)-gamma-L-glutamyl-L-glutamyl-[protein] + L-glutamate. The catalysed reaction is C-terminal L-alpha-aminoacyl-L-glutamyl-L-glutamyl-[tubulin] + H2O = C-terminal L-alpha-aminoacyl-L-glutamyl-[tubulin] + L-glutamate. In terms of biological role, metallocarboxypeptidase that mediates protein deglutamylation of tubulin and non-tubulin target proteins. Catalyzes the removal of polyglutamate side chains present on the gamma-carboxyl group of glutamate residues within the C-terminal tail of alpha- and beta-tubulin. Specifically cleaves tubulin long-side-chains, while it is not able to remove the branching point glutamate. Also catalyzes the removal of polyglutamate residues from the carboxy-terminus of alpha-tubulin as well as non-tubulin proteins. The chain is Cytosolic carboxypeptidase 1 (agtpbp1) from Xenopus laevis (African clawed frog).